Consider the following 135-residue polypeptide: Small ribosomal subunit protein uS12 (135 aa).

3-methylthioaspartic acid is present on aspartate 89. The tract at residues 101 to 135 (SLDTSGVADRKQSRSKYGAKQPKAGAAAPVKGKRR) is disordered. Residues 116-135 (KYGAKQPKAGAAAPVKGKRR) show a composition bias toward low complexity.

Belongs to the universal ribosomal protein uS12 family. Part of the 30S ribosomal subunit. Contacts proteins S8 and S17. May interact with IF1 in the 30S initiation complex.

Its function is as follows. With S4 and S5 plays an important role in translational accuracy. In terms of biological role, interacts with and stabilizes bases of the 16S rRNA that are involved in tRNA selection in the A site and with the mRNA backbone. Located at the interface of the 30S and 50S subunits, it traverses the body of the 30S subunit contacting proteins on the other side and probably holding the rRNA structure together. The combined cluster of proteins S8, S12 and S17 appears to hold together the shoulder and platform of the 30S subunit. The polypeptide is Small ribosomal subunit protein uS12 (Chlorobium phaeobacteroides (strain DSM 266 / SMG 266 / 2430)).